We begin with the raw amino-acid sequence, 70 residues long: Large ribosomal subunit protein bL31 (70 aa).

Zn(2+) is bound by residues Cys16, Cys18, Cys37, and Cys40.

Belongs to the bacterial ribosomal protein bL31 family. Type A subfamily. Part of the 50S ribosomal subunit. Zn(2+) serves as cofactor.

Binds the 23S rRNA. This is Large ribosomal subunit protein bL31 from Histophilus somni (strain 2336) (Haemophilus somnus).